A 157-amino-acid polypeptide reads, in one-letter code: AM-toxin biosynthesis protein 15 (157 aa).

The interval 17 to 43 (RARHWDSKQGSSNSDVASGGSEVAGNS) is disordered.

Its pathway is mycotoxin biosynthesis. Its function is as follows. Part of the gene clusters that mediate the biosynthesis of AM-toxins, host-selective toxins (HSTs) causing Alternaria blotch on apple, a worldwide distributed disease. AM-toxins are cyclic depsipeptides containing the 3 residues 2-hydroxy-isovaleric acid (2-HIV), dehydroalanine, L-alanine which are common for all 3 AM-toxins I to III. The fourth precursor is L-alpha-amino-methoxyphenyl-valeric acid (L-Amv) for AM-toxin I, L-alpha-amino-phenyl-valeric acid (L-Apv) for AM-toxin II, and L-alpha-amino-hydroxyphenyl-valeric acid (L-Ahv) for AM-toxin III. AM-toxins have two target sites for affecting susceptible apple cells; they cause invagination of the plasma membrane and electrolyte loss and chloroplast disorganization. The non-ribosomal peptide synthetase AMT1 contains 4 catalytic modules and is responsible for activation of each residue in AM-toxin. The aldo-keto reductase AMT2 catalyzes the conversion of 2-keto-isovaleric acid (2-KIV) to 2-hydroxy-isovaleric acid (2-HIV), one of the precursor residues incorporated by AMT1 during AM-toxin biosynthesis, by reduction of its ketone to an alcohol. The cytochrome P450 monooxygenase AMT3 and the thioesterase AMT4 are also important for AM-toxin production, but their exact function within the AM-toxin biosynthesis are not known yet. Up to 21 proteins (including AMT1 to AMT4) are predicted to be involved in AM-toxin biosynthesis since their expression ishighly up-regulated in AM-toxin-producing cultures. This Alternaria alternata (Alternaria rot fungus) protein is AM-toxin biosynthesis protein 15.